Here is a 148-residue protein sequence, read N- to C-terminus: Outer envelope pore protein 16-1, chloroplastic (148 aa).

The tract at residues 2–73 (PSSTFSGTVS…EHALKKLCKE (72 aa)) is contains 4 beta strands. 3 helical membrane passes run 75–91 (VYWG…EYGI), 102–118 (NAML…SAVG), and 125–142 (IVID…SQFV).

The protein belongs to the Tim17/Tim22/Tim23 family. Plastid outer envelope porin OEP16 (TC 1.B.30) subfamily. In terms of assembly, homodimer and oligomers in membrane. Forms large complexes including TOC33, pPORA and OEP161 during pPORA import into plastids at the plastid envelope membrane. In terms of tissue distribution, expressed predominantly in leaves and cotyledons.

The protein resides in the plastid. It is found in the chloroplast outer membrane. Its subcellular location is the etioplast membrane. Its activity is regulated as follows. Stimulated by GTP. Voltage-dependent high-conductance channel with a slight cation-selectivity; selective for amino acids but excludes triosephosphates or uncharged sugars. Non-essential amino acid-selective channel protein and translocation pore for NADPH:protochlorophyllide oxidoreductase A (PORA) and possibly PORB. Involved in PORA precursor (pPORA) import and thus confers photoprotection onto etiolated seedlings during greening. This is Outer envelope pore protein 16-1, chloroplastic (OEP161) from Arabidopsis thaliana (Mouse-ear cress).